Reading from the N-terminus, the 160-residue chain is Transcription elongation factor GreA (160 aa).

A coiled-coil region spans residues 11-38 (YDRLMKELERLKSERPAIIQAIKEAREE).

It belongs to the GreA/GreB family.

In terms of biological role, necessary for efficient RNA polymerase transcription elongation past template-encoded arresting sites. The arresting sites in DNA have the property of trapping a certain fraction of elongating RNA polymerases that pass through, resulting in locked ternary complexes. Cleavage of the nascent transcript by cleavage factors such as GreA or GreB allows the resumption of elongation from the new 3'terminus. GreA releases sequences of 2 to 3 nucleotides. The chain is Transcription elongation factor GreA from Nitratidesulfovibrio vulgaris (strain DSM 19637 / Miyazaki F) (Desulfovibrio vulgaris).